A 340-amino-acid chain; its full sequence is Replication factor C subunit 2 (340 aa).

59 to 66 (GSPGTGKT) is an ATP binding site.

This sequence belongs to the activator 1 small subunits family. Heteropentamer of subunits rfc1, rfc2, rfc3, rfc4 and rfc5 that forms a complex (RFC) with PCNA in the presence of ATP. Two other complexes exist where rfc1 can be replaced by either ctf18 or elg1 to form the ctf18-RFC or the elg1-RFC complexes respectively.

It localises to the nucleus. Its function is as follows. The elongation of primed DNA templates by DNA polymerase delta and epsilon requires the action of the accessory proteins PCNA and activator 1. Subunit 2 binds ATP and single-stranded DNA. This chain is Replication factor C subunit 2 (rfc2), found in Schizosaccharomyces pombe (strain 972 / ATCC 24843) (Fission yeast).